Reading from the N-terminus, the 120-residue chain is ATP-dependent Clp protease adapter protein ClpS (120 aa).

It belongs to the ClpS family. Binds to the N-terminal domain of the chaperone ClpA.

Involved in the modulation of the specificity of the ClpAP-mediated ATP-dependent protein degradation. The chain is ATP-dependent Clp protease adapter protein ClpS from Pseudomonas savastanoi pv. phaseolicola (strain 1448A / Race 6) (Pseudomonas syringae pv. phaseolicola (strain 1448A / Race 6)).